A 326-amino-acid polypeptide reads, in one-letter code: DnaJ homolog subfamily B member 6 (326 aa).

The J domain occupies 3-69; that stretch reads DYYEVLGVQK…KKRDIYDRFG (67 aa). The disordered stretch occupies residues 249-326; that stretch reads ALPFQPTNTR…KKKKSTKGSY (78 aa). A Phosphoserine modification is found at serine 277.

Homooligomer.

It is found in the cytoplasm. It localises to the perinuclear region. The protein localises to the nucleus. Its function is as follows. Has a stimulatory effect on the ATPase activity of HSP70 in a dose-dependent and time-dependent manner and hence acts as a co-chaperone of HSP70. Plays an indispensable role in the organization of KRT8/KRT18 filaments. Acts as an endogenous molecular chaperone for neuronal proteins including huntingtin. Suppresses aggregation and toxicity of polyglutamine-containing, aggregation-prone proteins. Also reduces cellular toxicity and caspase-3 activity. In Gallus gallus (Chicken), this protein is DnaJ homolog subfamily B member 6.